A 932-amino-acid polypeptide reads, in one-letter code: MGLTPMMRQYLEVKESCKDCILFFRLGDFYEMFFEDAKVASKELELVLTGRDCGLEERAPMCGIPYHAANTYIGRLVSAGYKIAICEQLEDPSASKGIVKRGIIKIITPGTYTDSSFLEENKNNYIMSFYLDDNMCAMSFADISTGEFNSTHSNFKEAVVLDEISKFAPREIVLEENIKESFIHTIKERFPNISISKIKEENFDYNIDNNLKEQFNNFNENEYETIVKKSANGLLYYIFHTQKNILSNINKIDYYSIVDYLTIDVNSRRNLEITENLREKTKKGSLLWVLDKTNTAMGGRQLRRWIEQPLINKNPIENRLNAVEELLNNISLQEDLKEDLKSIYDIERIVGKVASKSVNAKELISLKCSIGKVPYIKKYLSNFKSDLFLNMEQCIDTLEDIHKLLDKALLDNPSLSVKEGNIIKEGFNEEVDSLREAKSNGKKWIASLEQKEKEETGIKSLKVSYNKVFGYFIEITKANLNLVPEGRYIRKQTLSNAERYITPELKEMEEKILGAEEKLIDIEYKLFTKIRDFIEENIDRMQKTARIISDIDCLCSLATVALENNYIKPNINAKNEILIEEGRHPVVEKVIPKGEFISNDSLIDTKENQLILITGPNMAGKSTYMRQVALITIMAQIGSFVPAKKANISICDKIFTRIGASDDLAAGKSTFMVEMWEVSNILKNATSKSLVLLDEVGRGTSTYDGLSIAWSVIEYICNNKNLRCKTLFATHYHELTKLEDNIEGVKNYSVSVSELENEIVFLRKIIRGGADQSYGIEVAKLAGLPSPVINRAKEILQHIEGDKEENSLNITPSKEYKSKDYIEASKDTLNTKNNLESEIKHDTLSETNAATIVEDESTKEHLSSNKKQINCRINDEKSIKKEVAVDSFQINFEYIKRDKIIEEIKNIDILNMTPMEGFNKLYDIINKTKDID.

Residue Gly615–Ser622 participates in ATP binding.

This sequence belongs to the DNA mismatch repair MutS family.

Its function is as follows. This protein is involved in the repair of mismatches in DNA. It is possible that it carries out the mismatch recognition step. This protein has a weak ATPase activity. In Clostridium botulinum (strain Okra / Type B1), this protein is DNA mismatch repair protein MutS.